Consider the following 300-residue polypeptide: Porphobilinogen deaminase (300 aa).

S-(dipyrrolylmethanemethyl)cysteine is present on Cys239.

The protein belongs to the HMBS family. As to quaternary structure, monomer. It depends on dipyrromethane as a cofactor.

The enzyme catalyses 4 porphobilinogen + H2O = hydroxymethylbilane + 4 NH4(+). The protein operates within porphyrin-containing compound metabolism; protoporphyrin-IX biosynthesis; coproporphyrinogen-III from 5-aminolevulinate: step 2/4. In terms of biological role, tetrapolymerization of the monopyrrole PBG into the hydroxymethylbilane pre-uroporphyrinogen in several discrete steps. In Francisella tularensis subsp. holarctica (strain OSU18), this protein is Porphobilinogen deaminase.